A 280-amino-acid polypeptide reads, in one-letter code: Undecaprenyl-diphosphatase (280 aa).

Transmembrane regions (helical) follow at residues 1-21 (MTLL…PFPV), 45-65 (FLPF…GVFW), 90-110 (IFGL…LLEH), 115-135 (VFGT…LLMV), 151-171 (IATL…LALL), 226-246 (IMVQ…ICSL), and 260-280 (LTPF…VILL).

It belongs to the UppP family.

The protein localises to the cell inner membrane. The catalysed reaction is di-trans,octa-cis-undecaprenyl diphosphate + H2O = di-trans,octa-cis-undecaprenyl phosphate + phosphate + H(+). In terms of biological role, catalyzes the dephosphorylation of undecaprenyl diphosphate (UPP). Confers resistance to bacitracin. This Gluconobacter oxydans (strain 621H) (Gluconobacter suboxydans) protein is Undecaprenyl-diphosphatase.